Consider the following 865-residue polypeptide: Chitin synthase 3 (865 aa).

A disordered region spans residues 1–59 (MASQYPGHQLDDIPSTNVYRPPPRHEDDEAEHALLHQNSAYQSQYDDPHSRPLTPGQES). The segment covering 23–34 (PRHEDDEAEHAL) has biased composition (basic and acidic residues). The segment covering 36–45 (HQNSAYQSQY) has biased composition (polar residues). N-linked (GlcNAc...) asparagine glycosylation is found at Asn-64, Asn-95, and Asn-538. Helical transmembrane passes span 565–585 (FFLH…WFSL), 620–640 (IINT…FILA), and 650–670 (VAYI…IVLS). N-linked (GlcNAc...) asparagine glycosylation occurs at Asn-682. The next 3 helical transmembrane spans lie at 707–727 (IVII…FLYM), 735–755 (SFAQ…IYAF), and 837–857 (LVAT…SDSL).

The protein belongs to the chitin synthase family. Class III subfamily.

The protein localises to the cell membrane. It catalyses the reaction [(1-&gt;4)-N-acetyl-beta-D-glucosaminyl](n) + UDP-N-acetyl-alpha-D-glucosamine = [(1-&gt;4)-N-acetyl-beta-D-glucosaminyl](n+1) + UDP + H(+). In terms of biological role, polymerizes chitin, a structural polymer of the cell wall and septum, by transferring the sugar moiety of UDP-GlcNAc to the non-reducing end of the growing chitin polymer. Is not only stable at different pH, but is also able to tolerate a broad temperature range. With CHS2, plays an important role in virulence. The chain is Chitin synthase 3 from Exophiala dermatitidis (strain ATCC 34100 / CBS 525.76 / NIH/UT8656) (Black yeast).